Reading from the N-terminus, the 216-residue chain is Uracil phosphoribosyltransferase (216 aa).

GTP contacts are provided by residues Arg-30, Arg-39, 73–76 (ASKI), and Lys-75. Arg-83 is a binding site for 5-phospho-alpha-D-ribose 1-diphosphate. A GTP-binding site is contributed by Lys-100. A 5-phospho-alpha-D-ribose 1-diphosphate-binding site is contributed by Arg-108. Residue Arg-129 participates in GTP binding. Residues Asp-135 and 135–143 (DPMLATGGT) each bind 5-phospho-alpha-D-ribose 1-diphosphate. Tyr-199 is a binding site for D-ribose 5-phosphate. Uracil is bound by residues Ile-200 and 205 to 207 (GDF). Asp-206 contacts 5-phospho-alpha-D-ribose 1-diphosphate.

The protein belongs to the UPRTase family. It depends on Mg(2+) as a cofactor.

The catalysed reaction is UMP + diphosphate = 5-phospho-alpha-D-ribose 1-diphosphate + uracil. It functions in the pathway pyrimidine metabolism; UMP biosynthesis via salvage pathway; UMP from uracil: step 1/1. Its activity is regulated as follows. Allosterically activated by GTP. In terms of biological role, catalyzes the conversion of uracil and 5-phospho-alpha-D-ribose 1-diphosphate (PRPP) to UMP and diphosphate. The chain is Uracil phosphoribosyltransferase (uprt) from Dictyostelium discoideum (Social amoeba).